The chain runs to 353 residues: Photosystem II D2 protein (353 aa).

Threonine 2 carries the N-acetylthreonine modification. At threonine 2 the chain carries Phosphothreonine. A helical membrane pass occupies residues 41 to 61 (CAYFALGGWFTGTTFVTSWYT). Histidine 118 is a chlorophyll a binding site. The helical transmembrane segment at 125–141 (GFMLRQFELARSVQLRP) threads the bilayer. Glutamine 130 and asparagine 143 together coordinate pheophytin a. A helical transmembrane segment spans residues 153 to 166 (VFVSVFLIYPLGQS). Histidine 198 provides a ligand contact to chlorophyll a. The chain crosses the membrane as a helical span at residues 208 to 228 (AALLCAIHGATVENTLFEDGD). A plastoquinone is bound by residues histidine 215 and phenylalanine 262. Histidine 215 lines the Fe cation pocket. Histidine 269 provides a ligand contact to Fe cation. The chain crosses the membrane as a helical span at residues 279–295 (GLWMSAIGVVGLALNLR).

Belongs to the reaction center PufL/M/PsbA/D family. In terms of assembly, PSII is composed of 1 copy each of membrane proteins PsbA, PsbB, PsbC, PsbD, PsbE, PsbF, PsbH, PsbI, PsbJ, PsbK, PsbL, PsbM, PsbT, PsbX, PsbY, PsbZ, Psb30/Ycf12, at least 3 peripheral proteins of the oxygen-evolving complex and a large number of cofactors. It forms dimeric complexes. The D1/D2 heterodimer binds P680, chlorophylls that are the primary electron donor of PSII, and subsequent electron acceptors. It shares a non-heme iron and each subunit binds pheophytin, quinone, additional chlorophylls, carotenoids and lipids. There is also a Cl(-1) ion associated with D1 and D2, which is required for oxygen evolution. The PSII complex binds additional chlorophylls, carotenoids and specific lipids. serves as cofactor.

It localises to the plastid. The protein localises to the chloroplast thylakoid membrane. It carries out the reaction 2 a plastoquinone + 4 hnu + 2 H2O = 2 a plastoquinol + O2. Functionally, photosystem II (PSII) is a light-driven water:plastoquinone oxidoreductase that uses light energy to abstract electrons from H(2)O, generating O(2) and a proton gradient subsequently used for ATP formation. It consists of a core antenna complex that captures photons, and an electron transfer chain that converts photonic excitation into a charge separation. The D1/D2 (PsbA/PsbD) reaction center heterodimer binds P680, the primary electron donor of PSII as well as several subsequent electron acceptors. D2 is needed for assembly of a stable PSII complex. The polypeptide is Photosystem II D2 protein (Saccharum hybrid (Sugarcane)).